A 59-amino-acid chain; its full sequence is Potassium channel toxin alpha-KTx 1.2 (59 aa).

The first 22 residues, 1-22 (MKILSVLLLALIICSIIDWSEG), serve as a signal peptide directing secretion. Q23 is subject to Pyrrolidone carboxylic acid. 3 disulfides stabilise this stretch: C29/C50, C35/C55, and C39/C57. The tract at residues 48 to 55 (GKCMNKKC) is interaction with Ca(2+)-activated K(+) channels.

This sequence belongs to the short scorpion toxin superfamily. Potassium channel inhibitor family. Alpha-KTx 01 subfamily. As to expression, expressed by the venom gland.

It localises to the secreted. Its function is as follows. Blocks calcium-activated potassium channels (Kd=43 nM on KCa1.1/KCNMA1). Has a potent presynaptic facilitatory action, with less effect on direct muscle stimulation. This chain is Potassium channel toxin alpha-KTx 1.2, found in Leiurus hebraeus (Hebrew deathstalker scorpion).